The following is a 197-amino-acid chain: Glycerol-3-phosphate acyltransferase (197 aa).

4 helical membrane passes run 1–21 (MNFL…FAIV), 78–98 (PVEA…SVFL), 112–132 (VLAG…LAVA), and 155–175 (VLLG…ILVW).

This sequence belongs to the PlsY family. Probably interacts with PlsX.

Its subcellular location is the cell inner membrane. The catalysed reaction is an acyl phosphate + sn-glycerol 3-phosphate = a 1-acyl-sn-glycero-3-phosphate + phosphate. It participates in lipid metabolism; phospholipid metabolism. Catalyzes the transfer of an acyl group from acyl-phosphate (acyl-PO(4)) to glycerol-3-phosphate (G3P) to form lysophosphatidic acid (LPA). This enzyme utilizes acyl-phosphate as fatty acyl donor, but not acyl-CoA or acyl-ACP. This Aromatoleum aromaticum (strain DSM 19018 / LMG 30748 / EbN1) (Azoarcus sp. (strain EbN1)) protein is Glycerol-3-phosphate acyltransferase.